A 355-amino-acid chain; its full sequence is Guanine nucleotide-binding protein subunit alpha-14 (355 aa).

The region spanning 34–355 (RELKLLLLGT…QLNLREFNLV (322 aa)) is the G-alpha domain. The segment at 37-50 (KLLLLGTGESGKST) is G1 motif. GTP-binding positions include 42–49 (GTGESGKS), 176–182 (LRVRVPT), 201–205 (DVGGQ), 270–273 (NKKD), and Ala327. Positions 49 and 182 each coordinate Mg(2+). Residues 174–182 (DVLRVRVPT) form a G2 motif region. A G3 motif region spans residues 197 to 206 (FRMVDVGGQR). Positions 266–273 (ILFLNKKD) are G4 motif. A G5 motif region spans residues 325–330 (TCATDT).

It belongs to the G-alpha family. G(q) subfamily. G proteins are composed of 3 units; alpha, beta and gamma. The alpha chain contains the guanine nucleotide binding site.

In terms of biological role, guanine nucleotide-binding proteins (G proteins) are involved as modulators or transducers in various transmembrane signaling systems. The chain is Guanine nucleotide-binding protein subunit alpha-14 (GNA14) from Bos taurus (Bovine).